A 154-amino-acid polypeptide reads, in one-letter code: Myoglobin (154 aa).

The region spanning 2 to 148 (GLSDGEWQLV…FRNDMAAKYK (147 aa)) is the Globin domain. Residue Ser-4 is modified to Phosphoserine. His-65 provides a ligand contact to nitrite. His-65 provides a ligand contact to O2. Thr-68 bears the Phosphothreonine mark. His-94 contributes to the heme b binding site.

The protein belongs to the globin family. As to quaternary structure, monomeric.

It is found in the cytoplasm. It localises to the sarcoplasm. The catalysed reaction is Fe(III)-heme b-[protein] + nitric oxide + H2O = Fe(II)-heme b-[protein] + nitrite + 2 H(+). The enzyme catalyses H2O2 + AH2 = A + 2 H2O. In terms of biological role, monomeric heme protein which primary function is to store oxygen and facilitate its diffusion within muscle tissues. Reversibly binds oxygen through a pentacoordinated heme iron and enables its timely and efficient release as needed during periods of heightened demand. Depending on the oxidative conditions of tissues and cells, and in addition to its ability to bind oxygen, it also has a nitrite reductase activity whereby it regulates the production of bioactive nitric oxide. Under stress conditions, like hypoxia and anoxia, it also protects cells against reactive oxygen species thanks to its pseudoperoxidase activity. This Lagothrix lagotricha (Brown woolly monkey) protein is Myoglobin (MB).